Consider the following 274-residue polypeptide: NADH-ubiquinone oxidoreductase chain 2 (274 aa).

8 helical membrane passes run 28–48 (MIIM…FWFP), 54–74 (LTWM…LMLI), 79–99 (IKYL…IGGL), 107–127 (LMAF…MISE), 128–148 (SIWL…TFMF), 171–191 (FTLF…GFLP), 206–226 (FLLL…LRIC), and 254–274 (LIMT…YFMF).

This sequence belongs to the complex I subunit 2 family.

Its subcellular location is the mitochondrion inner membrane. The enzyme catalyses a ubiquinone + NADH + 5 H(+)(in) = a ubiquinol + NAD(+) + 4 H(+)(out). Core subunit of the mitochondrial membrane respiratory chain NADH dehydrogenase (Complex I) that is believed to belong to the minimal assembly required for catalysis. Complex I functions in the transfer of electrons from NADH to the respiratory chain. The immediate electron acceptor for the enzyme is believed to be ubiquinone. This is NADH-ubiquinone oxidoreductase chain 2 (mt:ND2) from Drosophila mauritiana (Fruit fly).